Reading from the N-terminus, the 492-residue chain is PHO85 cyclin-8 (492 aa).

Disordered regions lie at residues 1 to 32, 143 to 163, and 223 to 252; these read MANDQDPNKSLINDALTRSMSEFYDDDDDNDS, SGSGKLPGRVKSDTATQGTGR, and KVNSNSQIDTDNHSHESGNTTNNETDENES. The segment covering 8-20 has biased composition (polar residues); sequence NKSLINDALTRSM. The span at 23–32 shows a compositional bias: acidic residues; it reads FYDDDDDNDS. Position 32 is a phosphoserine (Ser-32).

This sequence belongs to the cyclin family. PHO80 subfamily. Forms a cyclin-CDK complex with PHO85.

It localises to the cytoplasm. The protein resides in the nucleus. Cyclin partner of the cyclin-dependent kinase (CDK) PHO85. Together with cyclin PCL10, negatively controls glycogen accumulation under favorable growth conditions. Involved in phosphorylation and negative regulation of glycogen synthase GSY2. Also has minor GLC8 kinase activity. This Saccharomyces cerevisiae (strain ATCC 204508 / S288c) (Baker's yeast) protein is PHO85 cyclin-8 (PCL8).